The sequence spans 95 residues: Aspartyl/glutamyl-tRNA(Asn/Gln) amidotransferase subunit C (95 aa).

It belongs to the GatC family. Heterotrimer of A, B and C subunits.

It catalyses the reaction L-glutamyl-tRNA(Gln) + L-glutamine + ATP + H2O = L-glutaminyl-tRNA(Gln) + L-glutamate + ADP + phosphate + H(+). The enzyme catalyses L-aspartyl-tRNA(Asn) + L-glutamine + ATP + H2O = L-asparaginyl-tRNA(Asn) + L-glutamate + ADP + phosphate + 2 H(+). Allows the formation of correctly charged Asn-tRNA(Asn) or Gln-tRNA(Gln) through the transamidation of misacylated Asp-tRNA(Asn) or Glu-tRNA(Gln) in organisms which lack either or both of asparaginyl-tRNA or glutaminyl-tRNA synthetases. The reaction takes place in the presence of glutamine and ATP through an activated phospho-Asp-tRNA(Asn) or phospho-Glu-tRNA(Gln). This Geobacter sp. (strain M21) protein is Aspartyl/glutamyl-tRNA(Asn/Gln) amidotransferase subunit C.